We begin with the raw amino-acid sequence, 95 residues long: Co-chaperonin GroES (95 aa).

This sequence belongs to the GroES chaperonin family. As to quaternary structure, heptamer of 7 subunits arranged in a ring. Interacts with the chaperonin GroEL.

Its subcellular location is the cytoplasm. In terms of biological role, together with the chaperonin GroEL, plays an essential role in assisting protein folding. The GroEL-GroES system forms a nano-cage that allows encapsulation of the non-native substrate proteins and provides a physical environment optimized to promote and accelerate protein folding. GroES binds to the apical surface of the GroEL ring, thereby capping the opening of the GroEL channel. The sequence is that of Co-chaperonin GroES from Ruegeria sp. (strain TM1040) (Silicibacter sp.).